Here is a 78-residue protein sequence, read N- to C-terminus: Large ribosomal subunit protein bL28 (78 aa).

It belongs to the bacterial ribosomal protein bL28 family.

This is Large ribosomal subunit protein bL28 from Azoarcus sp. (strain BH72).